We begin with the raw amino-acid sequence, 217 residues long: Histone H1-gamma, late (217 aa).

Disordered regions lie at residues 1 to 21 and 80 to 217; these read MSAA…HPPS and GKGA…PAKK. The region spanning 17–91 is the H15 domain; it reads AHPPSSQMVV…GASGSFKLGK (75 aa). Positions 104–113 are enriched in basic residues; sequence IAAKKAKLAA. Basic and acidic residues predominate over residues 114 to 123; sequence KKKEQREKKA. Positions 124-217 are enriched in basic residues; it reads LKTKARKEKV…AKKAAKPAKK (94 aa).

It belongs to the histone H1/H5 family.

Its subcellular location is the nucleus. It is found in the chromosome. Functionally, histones H1 are necessary for the condensation of nucleosome chains into higher-order structures. This is Histone H1-gamma, late from Strongylocentrotus purpuratus (Purple sea urchin).